We begin with the raw amino-acid sequence, 250 residues long: Probable syntaxin-8B (250 aa).

The Cytoplasmic segment spans residues 1–213 (MGDYWLNEHD…NRRMETIKQN (213 aa)). The stretch at 73 to 100 (EKELLRRKNKVESLISMKNQLNSTLDAA) forms a coiled coil. The t-SNARE coiled-coil homology domain occupies 148–210 (QHIMREQDES…RNANRRMETI (63 aa)). The chain crosses the membrane as a helical; Anchor for type IV membrane protein span at residues 214–234 (AGSTCMIVCIVILIILIVVLI). Residues 235–250 (ATDSGCKIYNDPKHCP) lie on the Vesicular side of the membrane.

The protein belongs to the syntaxin family.

It is found in the membrane. In Dictyostelium discoideum (Social amoeba), this protein is Probable syntaxin-8B (syn8B).